Consider the following 420-residue polypeptide: L-rhamnose isomerase (420 aa).

The Mn(2+) site is built by H262, D294, and D296.

The protein belongs to the rhamnose isomerase family. In terms of assembly, homotetramer. It depends on Mn(2+) as a cofactor.

The protein localises to the cytoplasm. The catalysed reaction is L-rhamnopyranose = L-rhamnulose. It functions in the pathway carbohydrate degradation; L-rhamnose degradation; glycerone phosphate from L-rhamnose: step 1/3. Catalyzes the interconversion of L-rhamnose and L-rhamnulose. This Pectobacterium atrosepticum (strain SCRI 1043 / ATCC BAA-672) (Erwinia carotovora subsp. atroseptica) protein is L-rhamnose isomerase.